A 649-amino-acid polypeptide reads, in one-letter code: Threonine--tRNA ligase (649 aa).

The TGS domain occupies 1–61 (MIKITFPDGA…TQDGSIEIVT (61 aa)). The segment at 242–540 (DHRKLGKELD…LIETYKGAFP (299 aa)) is catalytic. Cys-336, His-387, and His-517 together coordinate Zn(2+).

Belongs to the class-II aminoacyl-tRNA synthetase family. In terms of assembly, homodimer. Zn(2+) serves as cofactor.

Its subcellular location is the cytoplasm. The enzyme catalyses tRNA(Thr) + L-threonine + ATP = L-threonyl-tRNA(Thr) + AMP + diphosphate + H(+). Its function is as follows. Catalyzes the attachment of threonine to tRNA(Thr) in a two-step reaction: L-threonine is first activated by ATP to form Thr-AMP and then transferred to the acceptor end of tRNA(Thr). Also edits incorrectly charged L-seryl-tRNA(Thr). This Streptococcus mutans serotype c (strain ATCC 700610 / UA159) protein is Threonine--tRNA ligase.